The sequence spans 219 residues: Swarming motility regulation protein RssB (219 aa).

One can recognise a Response regulatory domain in the interval 2–116 (NILLVEDDLQ…ELISRVKAVN (115 aa)). Residue Asp51 is modified to 4-aspartylphosphate. A DNA-binding region (ompR/PhoB-type) is located at residues 124–218 (SQTWSLGALY…VRGIGYLLKK (95 aa)).

Its subcellular location is the cytoplasm. Functionally, member of the two-component regulatory system RssA/RssB involved in regulation of swarming motility which has been shown to be inhibited by saturated fatty acids. RssA/RssB regulates cellular fatty acid composition, hemolysin production and cell surface topography. RssA/RssB negatively regulates the activity of SlhBA. It can also act as a negative regulator for the control of the swarming initiation. RssB binds its own promoter. This chain is Swarming motility regulation protein RssB (rssB), found in Serratia marcescens.